A 564-amino-acid chain; its full sequence is Probable metalloprotease ARX1 (564 aa).

Belongs to the peptidase M24 family. As to quaternary structure, component of the nucleoplasmic and cytoplasmic pre-60S ribosomal particles.

Its subcellular location is the cytoplasm. It localises to the nucleus. Functionally, probable metalloprotease involved in proper assembly of pre-ribosomal particles during the biogenesis of the 60S ribosomal subunit. Accompanies the pre-60S particles to the cytoplasm. The protein is Probable metalloprotease ARX1 (ARX1) of Debaryomyces hansenii (strain ATCC 36239 / CBS 767 / BCRC 21394 / JCM 1990 / NBRC 0083 / IGC 2968) (Yeast).